The sequence spans 886 residues: Alanine--tRNA ligase (886 aa).

Positions 564, 568, 666, and 670 each coordinate Zn(2+).

This sequence belongs to the class-II aminoacyl-tRNA synthetase family. Requires Zn(2+) as cofactor.

It is found in the cytoplasm. It carries out the reaction tRNA(Ala) + L-alanine + ATP = L-alanyl-tRNA(Ala) + AMP + diphosphate. Its function is as follows. Catalyzes the attachment of alanine to tRNA(Ala) in a two-step reaction: alanine is first activated by ATP to form Ala-AMP and then transferred to the acceptor end of tRNA(Ala). Also edits incorrectly charged Ser-tRNA(Ala) and Gly-tRNA(Ala) via its editing domain. This chain is Alanine--tRNA ligase, found in Prochlorococcus marinus (strain MIT 9312).